Reading from the N-terminus, the 295-residue chain is Glycine--tRNA ligase alpha subunit (295 aa).

Belongs to the class-II aminoacyl-tRNA synthetase family. In terms of assembly, tetramer of two alpha and two beta subunits.

It localises to the cytoplasm. The catalysed reaction is tRNA(Gly) + glycine + ATP = glycyl-tRNA(Gly) + AMP + diphosphate. This is Glycine--tRNA ligase alpha subunit from Rhodospirillum rubrum (strain ATCC 11170 / ATH 1.1.1 / DSM 467 / LMG 4362 / NCIMB 8255 / S1).